A 566-amino-acid chain; its full sequence is Medium-chain fatty-acid--CoA ligase (566 aa).

Residue 231–242 (ILASERAYCARL) coordinates ATP.

The protein belongs to the ATP-dependent AMP-binding enzyme family. As to quaternary structure, homodimer. Mg(2+) serves as cofactor.

It localises to the cell membrane. The catalysed reaction is hexanoate + ATP + CoA = hexanoyl-CoA + AMP + diphosphate. It carries out the reaction octanoate + ATP + CoA = octanoyl-CoA + AMP + diphosphate. The enzyme catalyses dodecanoate + ATP + CoA = dodecanoyl-CoA + AMP + diphosphate. The protein operates within lipid metabolism; fatty acid beta-oxidation. Catalyzes the esterification, concomitant with transport, of exogenous fatty acids into metabolically active CoA thioesters for subsequent degradation or incorporation into phospholipids. Is maximally active on C6:0, C8:0 and C12:0 fatty acids, while has a low activity on C14-C18 chain length fatty acids. Is involved in the anaerobic beta-oxidative degradation of fatty acids, which allows anaerobic growth of E.coli on fatty acids as a sole carbon and energy source in the presence of nitrate or fumarate as a terminal electron acceptor. Can functionally replace FadD under anaerobic conditions. The sequence is that of Medium-chain fatty-acid--CoA ligase from Escherichia coli (strain K12).